We begin with the raw amino-acid sequence, 464 residues long: GDNF family receptor alpha-2 (464 aa).

An N-terminal signal peptide occupies residues Met1 to Ala21. Disulfide bonds link Cys40–Cys93, Cys47–Cys53, Cys63–Cys78, Cys95–Cys105, Cys161–Cys222, Cys168–Cys174, Cys185–Cys200, Cys195–Cys241, Cys224–Cys229, Cys251–Cys323, Cys258–Cys264, Cys275–Cys293, Cys285–Cys347, and Cys325–Cys335. The N-linked (GlcNAc...) asparagine glycan is linked to Asn52. 2 N-linked (GlcNAc...) asparagine glycosylation sites follow: Asn357 and Asn413. Ser444 carries the GPI-anchor amidated serine lipid modification. Residues Arg445 to Leu464 constitute a propeptide, removed in mature form.

The protein belongs to the GDNFR family. Interacts with NRTN ligand and RET: forms a 2:2:2 ternary complex composed of NRTN ligand, GFRA2 and RET receptor. Also forms a 4:4:4 tetrameric complex composed of 4 copies of NRTN ligand, GFRA2 and RET receptor, which prevents endocytosis of RET. Interacts with SORL1.

The protein resides in the cell membrane. Receptor for neurturin (NRTN), a growth factor that supports the survival of sympathetic neurons. NRTN-binding leads to autophosphorylation and activation of the RET receptor. Also able to mediate GDNF signaling through the RET tyrosine kinase receptor. This chain is GDNF family receptor alpha-2 (GFRA2), found in Pongo abelii (Sumatran orangutan).